The chain runs to 246 residues: Probable transcriptional regulatory protein AHA_1522 (246 aa).

This sequence belongs to the TACO1 family.

Its subcellular location is the cytoplasm. The sequence is that of Probable transcriptional regulatory protein AHA_1522 from Aeromonas hydrophila subsp. hydrophila (strain ATCC 7966 / DSM 30187 / BCRC 13018 / CCUG 14551 / JCM 1027 / KCTC 2358 / NCIMB 9240 / NCTC 8049).